We begin with the raw amino-acid sequence, 256 residues long: Small ribosomal subunit protein eS1 (256 aa).

Residue alanine 2 is modified to N-acetylalanine; partial.

It belongs to the eukaryotic ribosomal protein eS1 family. In terms of assembly, component of the small ribosomal subunit. Mature ribosomes consist of a small (40S) and a large (60S) subunit. The 40S subunit contains about 33 different proteins and 1 molecule of RNA (18S). The 60S subunit contains about 49 different proteins and 3 molecules of RNA (25S, 5.8S and 5S).

It is found in the cytoplasm. This is Small ribosomal subunit protein eS1 from Eremothecium gossypii (strain ATCC 10895 / CBS 109.51 / FGSC 9923 / NRRL Y-1056) (Yeast).